The chain runs to 221 residues: Probable transaldolase (221 aa).

The active-site Schiff-base intermediate with substrate is K87.

The protein belongs to the transaldolase family. Type 3B subfamily.

The protein resides in the cytoplasm. It catalyses the reaction D-sedoheptulose 7-phosphate + D-glyceraldehyde 3-phosphate = D-erythrose 4-phosphate + beta-D-fructose 6-phosphate. It functions in the pathway carbohydrate degradation; pentose phosphate pathway; D-glyceraldehyde 3-phosphate and beta-D-fructose 6-phosphate from D-ribose 5-phosphate and D-xylulose 5-phosphate (non-oxidative stage): step 2/3. In terms of biological role, transaldolase is important for the balance of metabolites in the pentose-phosphate pathway. The protein is Probable transaldolase of Syntrophobacter fumaroxidans (strain DSM 10017 / MPOB).